Here is a 264-residue protein sequence, read N- to C-terminus: Type 1 encapsulin shell protein (264 aa).

Belongs to the encapsulin family. Family 1 subfamily. In terms of assembly, forms hollow shells composed of 60 subunits. Monomers probably form pentamers which assemble into the shell. There are 12 pores where the pentamers meet as well as 3-fold axis channels and dimer channels; none are larger than 3-4 Angstroms in diameter. The N-terminus of the protein is inside the shell, the C-terminus is outside.

The protein resides in the encapsulin nanocompartment. In terms of biological role, shell component of a type 1 encapsulin nanocompartment. Assembles into proteinaceous shells 21-24 nm in diameter. Empty organelles can be expressed in E.coli. Cargo proteins (DypB) are targeted to the interior via their C-terminal extensions. This Rhodococcus erythropolis (strain PR4 / NBRC 100887) protein is Type 1 encapsulin shell protein.